A 613-amino-acid polypeptide reads, in one-letter code: RUN domain-containing protein 1 (613 aa).

The tract at residues 15–36 is disordered; that stretch reads AAVGPKAKDEEEEEEEPLPPCE. T54 is modified (phosphothreonine). Low complexity predominate over residues 57–69; the sequence is LEEATAEEPGAAP. 3 disordered regions span residues 57-79, 140-177, and 305-330; these read LEEA…PGRT, YEGP…RLET, and GKTG…KAED. Phosphoserine occurs at positions 71 and 75. Positions 159–177 are enriched in basic and acidic residues; the sequence is PWLRGEDQSEQEKQERLET. Residues 160–235 adopt a coiled-coil conformation; that stretch reads WLRGEDQSEQ…IKKLDMNLNE (76 aa). The span at 309-325 shows a compositional bias: polar residues; that stretch reads NGCSRTGSSRTPPGNSK. The 182-residue stretch at 421–602 folds into the RUN domain; that stretch reads ELTMAVRKEL…LKFSLPVDLA (182 aa). Position 497 is a phosphoserine (S497).

In terms of biological role, may play a role as p53/TP53 inhibitor and thus may have oncogenic activity. The sequence is that of RUN domain-containing protein 1 (RUNDC1) from Homo sapiens (Human).